Reading from the N-terminus, the 1172-residue chain is Protein diaphanous homolog 3 (1172 aa).

Positions 1–15 (MEKHRARALGRDSKA) are enriched in basic and acidic residues. The interval 1 to 36 (MEKHRARALGRDSKASRRKGLPSAPPAGPYELGEKR) is disordered. A Nuclear localization signal motif is present at residues 16–39 (SRRKGLPSAPPAGPYELGEKRPKL). Thr-47 carries the post-translational modification Phosphothreonine. At Ser-56 the chain carries Phosphoserine. Residues 57–96 (IRIPKGSKKERPPLPQLKTVSGSSDYSSVSSETMENNPKS) are disordered. The span at 77–87 (SGSSDYSSVSS) shows a compositional bias: low complexity. A GBD/FH3 domain is found at 94–456 (PKSLSENEVL…QIVLHRDGID (363 aa)). Position 155 is a phosphoserine (Ser-155). Positions 493-530 (CKKFEKECTDHQETQAQLQKKEAKINELQAELQAFKSQ) form a coiled coil. The tract at residues 535–586 (PPGTKIPLQTSAKGEPGPSAFPPAPPALGAGVPPPPPPPPPPPPPLPGMAMP) is disordered. The FH1 domain maps to 541–611 (PLQTSAKGEP…GQNFIPLNLP (71 aa)). Residues 553–581 (SAFPPAPPALGAGVPPPPPPPPPPPPPLP) are compositionally biased toward pro residues. In terms of domain architecture, FH2 spans 616 to 1014 (PKKEFKPEIS…EKRARIAKER (399 aa)). Positions 1037-1067 (DETGVMDSLLEALQSGAAFRDRRKRTPKLKD) constitute a DAD domain. Ser-1073 and Ser-1158 each carry phosphoserine. A Nuclear export signal motif is present at residues 1163 to 1172 (EALLARLRAL).

This sequence belongs to the formin homology family. Diaphanous subfamily. Post-translationally, ubiquitinated. Expressed in testis. Present in Sertoli cells (at protein level).

The protein resides in the cytoplasm. It localises to the nucleus. Functionally, actin nucleation and elongation factor required for the assembly of F-actin structures, such as actin cables and stress fibers. Required for cytokinesis, stress fiber formation and transcriptional activation of the serum response factor. Binds to GTP-bound form of Rho and to profilin: acts in a Rho-dependent manner to recruit profilin to the membrane, where it promotes actin polymerization. DFR proteins couple Rho and Src tyrosine kinase during signaling and the regulation of actin dynamics. Also acts as an actin nucleation and elongation factor in the nucleus by promoting nuclear actin polymerization inside the nucleus to drive serum-dependent SRF-MRTFA activity. The sequence is that of Protein diaphanous homolog 3 from Rattus norvegicus (Rat).